The chain runs to 596 residues: Chloride intracellular channel protein 6 (596 aa).

The interval 1 to 360 is disordered; sequence MAEATEPKEV…ALEEGDPGQE (360 aa). Over residues 34-48 the composition is skewed to basic and acidic residues; the sequence is LEGREASEEAAEAPR. Phosphoserine is present on S40. Over residues 65-74 the composition is skewed to gly residues; the sequence is GCGQDEGTGG. The span at 83 to 98 shows a compositional bias: low complexity; sequence GPEAETPGASGAPGEA. Positions 118–130 are enriched in polar residues; the sequence is SAQQVQGMSSGLD. Over residues 148–160 the composition is skewed to acidic residues; sequence DPTASEAGEEAES. 2 stretches are compositionally biased toward low complexity: residues 197-213 and 225-244; these read GSES…PQPQ and GGNE…AGEG. Over residues 246 to 290 the composition is skewed to basic and acidic residues; it reads TLGKDGSEEAASEDARVDAHENGDQGKLQEETGEEEARPEPELKG. Phosphoserine is present on S304. The segment covering 338–348 has biased composition (basic and acidic residues); sequence ELGRVNGRREN. A G-site motif is present at residues 379–382; that stretch reads CPFS. Residues 381 to 401 traverse the membrane as a helical segment; the sequence is FSQRLFMILWLKGVIFNVTTV. The GST C-terminal domain maps to 425-596; sequence DGEVKTDVNK…AYSDAAKRMK (172 aa).

Belongs to the chloride channel CLIC family. As to quaternary structure, monomer (soluble state). Interacts with dopamine receptors DRD2, DRD3 and DRD4. Post-translationally, phosphorylated.

The protein localises to the cytoplasm. Its subcellular location is the cell membrane. It carries out the reaction chloride(in) = chloride(out). Its activity is regulated as follows. Channel activity is redox- and pH-regulated. Inhibited by IAA-94. In the soluble state, catalyzes glutaredoxin-like thiol disulfide exchange reactions with reduced glutathione as electron donor. Can insert into membranes and form voltage-dependent chloride-selective channels. The channel opens upon membrane depolarization at positive voltages and closes at negative membrane voltages. May play a critical role in water-secreting cells, possibly through the regulation of chloride ion transport. This chain is Chloride intracellular channel protein 6 (Clic6), found in Mus musculus (Mouse).